Consider the following 301-residue polypeptide: Enolase-phosphatase E1 (301 aa).

The Mg(2+) site is built by aspartate 22 and glutamate 24. Substrate-binding positions include 163-164 and lysine 197; that span reads SS. Aspartate 222 serves as a coordination point for Mg(2+). The segment at 273–301 is disordered; sequence AQAGDTEAKRSASGDGALAAKKAPPTHDF.

It belongs to the HAD-like hydrolase superfamily. MasA/MtnC family. Monomer. Mg(2+) serves as cofactor.

The protein resides in the cytoplasm. The protein localises to the nucleus. It catalyses the reaction 5-methylsulfanyl-2,3-dioxopentyl phosphate + H2O = 1,2-dihydroxy-5-(methylsulfanyl)pent-1-en-3-one + phosphate. Its pathway is amino-acid biosynthesis; L-methionine biosynthesis via salvage pathway; L-methionine from S-methyl-5-thio-alpha-D-ribose 1-phosphate: step 3/6. The protein operates within amino-acid biosynthesis; L-methionine biosynthesis via salvage pathway; L-methionine from S-methyl-5-thio-alpha-D-ribose 1-phosphate: step 4/6. Its function is as follows. Bifunctional enzyme that catalyzes the enolization of 2,3-diketo-5-methylthiopentyl-1-phosphate (DK-MTP-1-P) into the intermediate 2-hydroxy-3-keto-5-methylthiopentenyl-1-phosphate (HK-MTPenyl-1-P), which is then dephosphorylated to form the acireductone 1,2-dihydroxy-3-keto-5-methylthiopentene (DHK-MTPene). The polypeptide is Enolase-phosphatase E1 (Monosiga brevicollis (Choanoflagellate)).